A 524-amino-acid polypeptide reads, in one-letter code: Methyl-CpG-binding domain-containing protein 8 (524 aa).

The segment covering 45–60 (CSSLSPSSSASLAASA) has biased composition (low complexity). Residues 45-151 (CSSLSPSSSA…EEELEDNEGQ (107 aa)) are disordered. Residues 75 to 84 (FNESAGSRKQ) are compositionally biased toward polar residues. Residues 106–116 (RQRDDSSREEQ) show a composition bias toward basic and acidic residues. Residues 136–149 (EEEDEGEEELEDNE) show a composition bias toward acidic residues. The region spanning 334-406 (VVNACDYGGY…QHYYLQSDNK (73 aa)) is the MBD domain.

As to expression, expressed in shoot meristems, roots (vasculature and tips), hypocotyls (vasculature), cotyledons (vasculature and hydathodes), young leaves, buds, flowers and stems. Detected in stomata.

It is found in the nucleus. Probable transcriptional regulator. May regulates developmental traits such as flowering time. The sequence is that of Methyl-CpG-binding domain-containing protein 8 (MBD8) from Arabidopsis thaliana (Mouse-ear cress).